Reading from the N-terminus, the 124-residue chain is Vicilin, 14 kDa component (124 aa).

The disordered stretch occupies residues 23–57 (LSKNAKSSSRRSVSSESGPFNLRSEDPLYSNNSGK). Asn-53 carries an N-linked (GlcNAc...) asparagine glycan.

Belongs to the 7S seed storage protein family.

Its subcellular location is the vacuole. The protein localises to the aleurone grain. Its function is as follows. Seed storage protein. In Pisum sativum (Garden pea), this protein is Vicilin, 14 kDa component.